The sequence spans 253 residues: UPF0758 protein Bxeno_A3578 (253 aa).

Positions 131-253 (LINSPEAVEN…VYSFARAGWP (123 aa)) constitute an MPN domain. Zn(2+)-binding residues include H202, H204, and D215. The JAMM motif signature appears at 202–215 (HNHPSGAVQPSASD).

This sequence belongs to the UPF0758 family.

The polypeptide is UPF0758 protein Bxeno_A3578 (Paraburkholderia xenovorans (strain LB400)).